Reading from the N-terminus, the 911-residue chain is Band 3 anion transport protein (911 aa).

Methionine 1 bears the N-acetylmethionine mark. The segment covering 1–26 (MEELQDDYEDMMEENLEQEEYEDPDI) has biased composition (acidic residues). The interval 1-40 (MEELQDDYEDMMEENLEQEEYEDPDIPESQMEEPAAHDTE) is disordered. At 1–403 (MEELQDDYED…LSDITDAFSP (403 aa)) the chain is on the cytoplasmic side. Residues tyrosine 8, tyrosine 21, and tyrosine 46 each carry the phosphotyrosine modification. Residues 13-31 (EENLEQEEYEDPDIPESQM) form a (Microbial infection) Interaction with P.falciparum (isolate K1) FBPA region. The tract at residues 55 to 290 (HKVYVELQEL…LGRAAATLMS (236 aa)) is globular. The interaction with ANK1 stretch occupies residues 176–185 (AVLTRSGDPS). 2 positions are modified to phosphoserine: serine 185 and serine 350. The interval 304–357 (RGELLHSLEGFLDCSLVLPPTDAPSEQALLSLVPVQRELLRRRYQSSPAKPDSS) is dimerization arm. Tyrosine 359 carries the phosphotyrosine modification. Residues 404 to 427 (QVLAAVIFIYFAALSPAITFGGLL) traverse the membrane as a helical segment. Topologically, residues 428–435 (GEKTRNQM) are extracellular. A helical membrane pass occupies residues 436–456 (GVSELLISTAVQGILFALLGA). Residues 457–459 (QPL) lie on the Cytoplasmic side of the membrane. A discontinuously helical membrane pass occupies residues 460–476 (LVVGFSGPLLVFEEAFF). Residues 477–485 (SFCETNGLE) lie on the Extracellular side of the membrane. Residues 486–506 (YIVGRVWIGFWLILLVVLVVA) form a helical membrane-spanning segment. Over 507–518 (FEGSFLVRFISR) the chain is Cytoplasmic. The chain crosses the membrane as a helical span at residues 519–541 (YTQEIFSFLISLIFIYETFSKLI). Topologically, residues 542 to 570 (KIFQDHPLQKTYNYNVLMVPKPQGPLPNT) are extracellular. The segment at 559-630 (MVPKPQGPLP…DFFIQDTYTQ (72 aa)) is involved in anion transport. A helical transmembrane segment spans residues 571–591 (ALLSLVLMAGTFFFAMMLRKF). Over 592–602 (KNSSYFPGKLR) the chain is Cytoplasmic. The helical transmembrane segment at 603-623 (RVIGDFGVPISILIMVLVDFF) threads the bilayer. Residues 624-663 (IQDTYTQKLSVPDGFKVSNSSARGWVIHPLGLRSEFPIWM) lie on the Extracellular side of the membrane. An N-linked (GlcNAc...) (complex) asparagine glycan is attached at asparagine 642. The chain crosses the membrane as a helical span at residues 664–684 (MFASALPALLVFILIFLESQI). The Cytoplasmic segment spans residues 685 to 700 (TTLIVSKPERKMVKGS). A helical transmembrane segment spans residues 701–719 (GFHLDLLLVVGMGGVAALF). Residues 720-737 (GMPWLSATTVRSVTHANA) traverse the membrane as a discontinuously helical segment. The tract at residues 720-761 (GMPWLSATTVRSVTHANALTVMGKASTPGAAAQIQEVKEQRI) is (Microbial infection) 5ABC region; interaction with P.falciparum (isolate 3D7) MSP9. The Cytoplasmic segment spans residues 738 to 760 (LTVMGKASTPGAAAQIQEVKEQR). The next 2 membrane-spanning stretches (helical) occupy residues 761–781 (ISGL…PILS) and 782–800 (RIPL…VTSL). At 801–838 (SGIQLFDRILLLFKPPKYHPDVPYVKRVKTWRMHLFTG) the chain is on the cytoplasmic side. Positions 839–869 (IQIICLAVLWVVKSTPASLALPFVLILTVPL) form an intramembrane region, discontinuously helical. Cysteine 843 is lipidated: S-palmitoyl cysteine. Over 870 to 911 (RRVLLPLIFRNVELQCLDADDAKATFDEEEGRDEYDEVAMPV) the chain is Cytoplasmic. Tyrosine 904 is subject to Phosphotyrosine.

The protein belongs to the anion exchanger (TC 2.A.31) family. In terms of assembly, a dimer in solution, but in its membrane environment, it exists primarily as a mixture of dimers and tetramers and spans the membrane asymmetrically. Component of the ankyrin-1 complex in the erythrocyte, composed of ANK1, RHCE, RHAG, SLC4A1, EPB42, GYPA, GYPB and AQP1. Interacts with STOM; this interaction positively regulates SLC4A1 activity. Interacts with GYPA; a GYPA monomer is bound at each end of the SLC4A1 dimer forming a heterotetramer. Three SLC4A1 dimers (Band 3-I, Band 3-II and Band 3-III) participates in the ankyrin-1 complex. Interacts (via the cytoplasmic domain) with EPB42; this interaction is mediated by the SLC4A1 Band 3-I dimer. Interacts (via the cytoplasmic domain) directly with ANK1; this interaction is mediated by the SLC4A1 Band 3-II and Band 3-III dimers. As to quaternary structure, interacts with TMEM139. (Microbial infection) Interacts (via N-terminus) with P.falciparum (isolate K1) aldolase FBPA; the interaction inhibits FBPA catalytic activity. In terms of assembly, (Microbial infection) Interacts (via the 5ABC region) with P.falciparum (isolate 3D7) MSP9/ABRA (via N-terminus). As to quaternary structure, (Microbial infection) Interacts (via the 5ABC region) with P.falciparum (isolate 3D7) MSP1 p42 subunit. Post-translationally, phosphorylated on Tyr-8 and Tyr-21 most likely by SYK. PP1-resistant phosphorylation that precedes Tyr-359 and Tyr-904 phosphorylation. Phosphorylated on Tyr-359 and Tyr-904 most likely by LYN. PP1-inhibited phosphorylation that follows Tyr-8 and Tyr-21 phosphorylation. In terms of processing, N-glycosylated. As to expression, detected in erythrocytes (at protein level). In terms of tissue distribution, expressed in kidney (at protein level).

The protein resides in the cell membrane. The protein localises to the basolateral cell membrane. The catalysed reaction is hydrogencarbonate(in) + chloride(out) = hydrogencarbonate(out) + chloride(in). With respect to regulation, phenyl isothiocyanate inhibits anion transport in vitro. Functions both as a transporter that mediates electroneutral anion exchange across the cell membrane and as a structural protein. Component of the ankyrin-1 complex of the erythrocyte membrane; required for normal flexibility and stability of the erythrocyte membrane and for normal erythrocyte shape via the interactions of its cytoplasmic domain with cytoskeletal proteins, glycolytic enzymes, and hemoglobin. Functions as a transporter that mediates the 1:1 exchange of inorganic anions across the erythrocyte membrane. Mediates chloride-bicarbonate exchange in the kidney, and is required for normal acidification of the urine. Its function is as follows. (Microbial infection) Acts as a receptor for P.falciparum (isolate 3D7) MSP9 and thus, facilitates merozoite invasion of erythrocytes. Acts as a receptor for P.falciparum (isolate 3D7) MSP1 and thus, facilitates merozoite invasion of erythrocytes. The chain is Band 3 anion transport protein from Homo sapiens (Human).